The following is a 541-amino-acid chain: Berberine bridge enzyme-like 24 (541 aa).

The N-terminal stretch at 1-32 (MGNSKPLPTISCIIVSVLYFSFYCITPTSSSA) is a signal peptide. C41 and C105 form a disulfide bridge. N62 carries an N-linked (GlcNAc...) asparagine glycan. One can recognise an FAD-binding PCMH-type domain in the interval 83 to 259 (SMPKPGFIFR…LAWKIKLVPV (177 aa)). Residues 120–184 (HDFEALSYVS…KIHGFPAGLC (65 aa)) constitute a cross-link (6-(S-cysteinyl)-8alpha-(pros-histidyl)-FAD (His-Cys)). N-linked (GlcNAc...) asparagine glycosylation is found at N309, N408, and N435.

Belongs to the oxygen-dependent FAD-linked oxidoreductase family. Requires FAD as cofactor. Post-translationally, the FAD cofactor is bound via a bicovalent 6-S-cysteinyl, 8alpha-N1-histidyl FAD linkage.

It localises to the secreted. It is found in the cell wall. This chain is Berberine bridge enzyme-like 24, found in Arabidopsis thaliana (Mouse-ear cress).